The primary structure comprises 215 residues: Chaperone protein TorD (215 aa).

It belongs to the TorD/DmsD family. TorD subfamily.

The protein resides in the cytoplasm. In terms of biological role, involved in the biogenesis of TorA. Acts on TorA before the insertion of the molybdenum cofactor and, as a result, probably favors a conformation of the apoenzyme that is competent for acquiring the cofactor. In Vibrio parahaemolyticus serotype O3:K6 (strain RIMD 2210633), this protein is Chaperone protein TorD.